The primary structure comprises 476 residues: Hyaluronidase-2 (476 aa).

The first 20 residues, 1-20 (MWTGLGPAVTLALVLVVAWA), serve as a signal peptide directing secretion. Disulfide bonds link Cys47/Cys343 and Cys214/Cys230. N-linked (GlcNAc...) asparagine glycosylation is found at Asn77 and Asn106. The active-site Proton donor is the Glu138. N-linked (GlcNAc...) asparagine glycosylation is found at Asn340 and Asn360. Residues 364-442 (AAQYCSWAQC…YLGWGGEQCQ (79 aa)) enclose the EGF-like domain. Cystine bridges form between Cys368–Cys379, Cys373–Cys430, and Cys432–Cys441. Gly451 is lipidated: GPI-anchor amidated glycine. The propeptide at 452–476 (ASGAWAGSHLTGLLAVAVLAFTWTS) is removed in mature form.

It belongs to the glycosyl hydrolase 56 family. In terms of assembly, interacts with MST1R. As to quaternary structure, (Microbial infection) Interacts with Jaagsiekte sheep retrovirus (JSRV) envelope proteins.

The protein resides in the cell membrane. It carries out the reaction Random hydrolysis of (1-&gt;4)-linkages between N-acetyl-beta-D-glucosamine and D-glucuronate residues in hyaluronate.. In terms of biological role, catalyzes hyaluronan degradation into small fragments that are endocytosed and degraded in lysosomes by HYAL1 and exoglycosidases. Essential for the breakdown of extracellular matrix hyaluronan. This chain is Hyaluronidase-2 (HYAL2), found in Ovis aries (Sheep).